Here is a 346-residue protein sequence, read N- to C-terminus: Probable electron transfer flavoprotein subunit alpha, mitochondrial (346 aa).

285 to 313 (LYVAIGISGAIQHLAGMKESKMIIAINKD) lines the FAD pocket.

The protein belongs to the ETF alpha-subunit/FixB family. Heterodimer of an alpha and a beta subunit. The cofactor is FAD.

The protein localises to the mitochondrion matrix. The electron transfer flavoprotein serves as a specific electron acceptor for several dehydrogenases, including five acyl-CoA dehydrogenases, glutaryl-CoA and sarcosine dehydrogenase. It transfers the electrons to the main mitochondrial respiratory chain via ETF-ubiquinone oxidoreductase (ETF dehydrogenase). The protein is Probable electron transfer flavoprotein subunit alpha, mitochondrial (ETF1) of Cryptococcus gattii serotype B (strain WM276 / ATCC MYA-4071) (Filobasidiella gattii).